A 147-amino-acid chain; its full sequence is Hemoglobin subunit epsilon (147 aa).

The region spanning 3-147 (HFTAEEKAAI…VAIALGHKYH (145 aa)) is the Globin domain. Residues serine 14 and serine 51 each carry the phosphoserine modification. Heme b contacts are provided by histidine 64 and histidine 93.

It belongs to the globin family. As to quaternary structure, heterotetramer of two alpha chains and two epsilon chains in early embryonic hemoglobin Gower-2; two zeta chains and two epsilon chains in early embryonic hemoglobin Gower-1. As to expression, red blood cells.

In terms of biological role, the epsilon chain is a beta-type chain of early mammalian embryonic hemoglobin. The sequence is that of Hemoglobin subunit epsilon (HBE1) from Pithecia irrorata (Gray monk saki).